A 275-amino-acid chain; its full sequence is Ribosomal RNA small subunit methyltransferase A (275 aa).

S-adenosyl-L-methionine is bound by residues asparagine 19, leucine 21, glycine 46, glutamate 71, aspartate 94, and asparagine 117.

The protein belongs to the class I-like SAM-binding methyltransferase superfamily. rRNA adenine N(6)-methyltransferase family. RsmA subfamily.

It is found in the cytoplasm. It catalyses the reaction adenosine(1518)/adenosine(1519) in 16S rRNA + 4 S-adenosyl-L-methionine = N(6)-dimethyladenosine(1518)/N(6)-dimethyladenosine(1519) in 16S rRNA + 4 S-adenosyl-L-homocysteine + 4 H(+). In terms of biological role, specifically dimethylates two adjacent adenosines (A1518 and A1519) in the loop of a conserved hairpin near the 3'-end of 16S rRNA in the 30S particle. May play a critical role in biogenesis of 30S subunits. The protein is Ribosomal RNA small subunit methyltransferase A of Burkholderia mallei (strain NCTC 10247).